A 342-amino-acid polypeptide reads, in one-letter code: Dysbindin (342 aa).

S11 carries the post-translational modification Phosphoserine. Residues 83 to 180 adopt a coiled-coil conformation; the sequence is LSAHWEKKQA…AELDAEHSQK (98 aa). The Nuclear export signal signature appears at 243 to 256; that stretch reads LMDISDQEALDVFL. The disordered stretch occupies residues 263–342; the sequence is NTLLSPISGP…ATLHSDDSDS (80 aa). A compositionally biased stretch (low complexity) spans 286-305; that stretch reads PTPSQAPATPPSSSSPGTDP. 3 positions are modified to phosphoserine: S316, S321, and S340.

It belongs to the dysbindin family. As to quaternary structure, interacts (via its coiled coil domain) with KXD1. Interacts with CMYA5, PI4K2 and RNF151. Component of the biogenesis of lysosome-related organelles complex 1 (BLOC-1) composed of at least BLOC1S1, BLOC1S2, BLOC1S3, BLOC1S4, BLOC1S5, BLOC1S6, DTNBP1/BLOC1S7 and SNAPIN/BLOC1S8. Interacts directly in the complex with BLOC1S5, BLOC1S6 and SNAPIN/BLOC1S8. The BLOC-1 complex associates with the AP-3 protein complex and membrane protein cargos. This BLOC-1 complex also associates with the BLOC-2 complex in endosomes. Binds to DTNA and DTNB but may not be a physiological binding partner. Interacts with the DNA-dependent protein kinase complex DNA-PK; the interaction phosphorylates DTNBP1 in vitro. Interacts directly in this complex with XRCC5 and XRCC6. Interacts with AP3M1, AP3B2 and TRIM32. Interacts with XPO1; the interaction exports DTNBP1 out of the nucleus. In terms of processing, ubiquitinated by TRIM32. Ubiquitination leads to DTNBP1 degradation.

The protein localises to the cytoplasm. Its subcellular location is the cytoplasmic vesicle membrane. The protein resides in the cytoplasmic vesicle. It localises to the secretory vesicle. It is found in the synaptic vesicle membrane. The protein localises to the endosome membrane. Its subcellular location is the melanosome membrane. The protein resides in the nucleus. It localises to the postsynaptic density. It is found in the presynaptic cell membrane. The protein localises to the endoplasmic reticulum. Component of the BLOC-1 complex, a complex that is required for normal biogenesis of lysosome-related organelles (LRO), such as platelet dense granules and melanosomes. In concert with the AP-3 complex, the BLOC-1 complex is required to target membrane protein cargos into vesicles assembled at cell bodies for delivery into neurites and nerve terminals. The BLOC-1 complex, in association with SNARE proteins, is also proposed to be involved in neurite extension. Associates with the BLOC-2 complex to facilitate the transport of TYRP1 independent of AP-3 function. Plays a role in synaptic vesicle trafficking and in neurotransmitter release. Plays a role in the regulation of cell surface exposure of DRD2. May play a role in actin cytoskeleton reorganization and neurite outgrowth. May modulate MAPK8 phosphorylation. Appears to promote neuronal transmission and viability through regulating the expression of SNAP25 and SYN1, modulating PI3-kinase-Akt signaling and influencing glutamatergic release. Regulates the expression of SYN1 through binding to its promoter. Modulates prefrontal cortical activity via the dopamine/D2 pathway. This chain is Dysbindin (DTNBP1), found in Bos taurus (Bovine).